The chain runs to 780 residues: ATP-dependent 6-phosphofructokinase, liver type (780 aa).

A2 bears the N-acetylalanine mark. Residues 2–390 (ATVDLEKLRM…NWKIYKLLAH (389 aa)) are N-terminal catalytic PFK domain 1. ATP contacts are provided by residues G25, 88 to 89 (RC), and 118 to 121 (GDGS). D119 serves as a coordination point for Mg(2+). Substrate-binding positions include 164–166 (SID), R201, 208–210 (MGR), E264, R292, and 298–301 (HVQR). The active-site Proton acceptor is D166. S377 is subject to Phosphoserine. Residues 391-400 (QKVSKEKSNF) are interdomain linker. Residues 401-780 (SLAILNVGAP…RRTLSIDKGF (380 aa)) form a C-terminal regulatory PFK domain 2 region. Residues R470, 527–531 (TISNN), R565, 572–574 (MGG), and E628 each bind beta-D-fructose 2,6-bisphosphate. The O-linked (GlcNAc) serine glycan is linked to S529. Y640 carries the post-translational modification Phosphotyrosine. Beta-D-fructose 2,6-bisphosphate is bound by residues R654, 660–663 (HLQQ), and R734. Position 775 is a phosphoserine (S775).

It belongs to the phosphofructokinase type A (PFKA) family. ATP-dependent PFK group I subfamily. Eukaryotic two domain clade 'E' sub-subfamily. In terms of assembly, homo- and heterotetramers. Phosphofructokinase (PFK) enzyme functions as a tetramer composed of different combinations of 3 types of subunits, called PFKM (M), PFKL (L) and PFKP (P). The composition of the PFK tetramer differs according to the tissue type it is present in. The kinetic and regulatory properties of the tetrameric enzyme are dependent on the subunit composition, hence can vary across tissues. It depends on Mg(2+) as a cofactor. In terms of processing, glcNAcylation at Ser-529 by OGT decreases enzyme activity, leading to redirect glucose flux through the oxidative pentose phosphate pathway. Glycosylation is stimulated by both hypoxia and glucose deprivation.

Its subcellular location is the cytoplasm. The catalysed reaction is beta-D-fructose 6-phosphate + ATP = beta-D-fructose 1,6-bisphosphate + ADP + H(+). It functions in the pathway carbohydrate degradation; glycolysis; D-glyceraldehyde 3-phosphate and glycerone phosphate from D-glucose: step 3/4. Its activity is regulated as follows. Allosterically activated by ADP, AMP, or fructose 2,6-bisphosphate, and allosterically inhibited by ATP or citrate. GlcNAcylation by OGT overcomes allosteric regulation. Functionally, catalyzes the phosphorylation of D-fructose 6-phosphate to fructose 1,6-bisphosphate by ATP, the first committing step of glycolysis. Negatively regulates the phagocyte oxidative burst in response to bacterial infection by controlling cellular NADPH biosynthesis and NADPH oxidase-derived reactive oxygen species. Upon macrophage activation, drives the metabolic switch toward glycolysis, thus preventing glucose turnover that produces NADPH via pentose phosphate pathway. The chain is ATP-dependent 6-phosphofructokinase, liver type (Pfkl) from Rattus norvegicus (Rat).